The following is a 673-amino-acid chain: Gametogenetin (673 aa).

Residues 1–599 (MGNVQSEPSA…TSTAGASNKG (599 aa)) form a disordered region. Residues 14–30 (SRKEQASDRASDSRRTP) show a composition bias toward basic and acidic residues. Residues 70–83 (ASSSPLPLTLELPS) show a composition bias toward low complexity. Residues 125-506 (RGLLEASHRG…APTPPSTLSP (382 aa)) are interaction with GGNBP1. Over residues 161-178 (PAPPPTPLEPRKQLPPAP) the composition is skewed to pro residues. The segment covering 192-202 (LASSATSPTES) has biased composition (polar residues). The span at 257 to 268 (SASGPLAAKASP) shows a compositional bias: low complexity. Ser399 is modified (phosphoserine). Low complexity predominate over residues 413–424 (PRRPTPALLAPP). Residues 438 to 475 (RPVPPSPQQIPPLPPPPPTPPATPPPAPPPTPQPPALP) are compositionally biased toward pro residues. Low complexity predominate over residues 504-531 (LSPTAAADQVPAATPATVTSQVPATATA). Positions 511-673 (DQVPAATPAT…HYDLQATHST (163 aa)) are interactions with ZNF403/GGNBP2 and OAZ3. Residues 542 to 551 (TRTRRNKGPR) are compositionally biased toward basic residues.

In terms of assembly, isoform 1 and isoform 3 interact with FANCL. Isoform 1 interacts with GGNBP1, ZNF403/GGNBP2 and OAZ3. Isoform 2 interacts with GGNBP1. As to expression, testis-specific. Specifically expressed in the germ cells and not in the somatic, Sertoli, or Leydig cells. In adult testis, expression starts in stage VIII pachytene spermatocytes, increases in stage IX and X pachytene spermatocytes, and culminates in stage XI diplotene spermatocytes and the meiotic cells in stage XII. Expression decreases slightly in step 1-3 spermatids, further decreases in step 4-11 spermatids, and is no longer detectable in step 12 spermatids and beyond. Isoform 2 is mainly expressed in testis.

It is found in the cytoplasm. It localises to the perinuclear region. Its subcellular location is the cytoplasmic vesicle. The protein localises to the nucleus. The protein resides in the nucleolus. May be involved in spermatogenesis. This is Gametogenetin (Ggn) from Mus musculus (Mouse).